Consider the following 112-residue polypeptide: Large ribosomal subunit protein uL22 (112 aa).

Belongs to the universal ribosomal protein uL22 family. In terms of assembly, part of the 50S ribosomal subunit.

Functionally, this protein binds specifically to 23S rRNA; its binding is stimulated by other ribosomal proteins, e.g. L4, L17, and L20. It is important during the early stages of 50S assembly. It makes multiple contacts with different domains of the 23S rRNA in the assembled 50S subunit and ribosome. Its function is as follows. The globular domain of the protein is located near the polypeptide exit tunnel on the outside of the subunit, while an extended beta-hairpin is found that lines the wall of the exit tunnel in the center of the 70S ribosome. This chain is Large ribosomal subunit protein uL22, found in Nitratidesulfovibrio vulgaris (strain DSM 19637 / Miyazaki F) (Desulfovibrio vulgaris).